Reading from the N-terminus, the 128-residue chain is Small ribosomal subunit protein uS10 (128 aa).

This sequence belongs to the universal ribosomal protein uS10 family.

This is Small ribosomal subunit protein uS10 (RPS20) from Oryza sativa subsp. japonica (Rice).